The primary structure comprises 274 residues: Penicillin-insensitive murein endopeptidase (274 aa).

Positions 1-19 (MKKTVIALLAWFVSSASLA) are cleaved as a signal peptide. 3 cysteine pairs are disulfide-bonded: Cys-44/Cys-265, Cys-187/Cys-235, and Cys-216/Cys-223. The Zn(2+) site is built by His-110, His-113, Asp-120, Asp-147, His-150, and His-211. The tract at residues 225 to 274 (DQPLPPPGDGCGAELQSWFEPPKPGTTKPEKKTPPPLPPSCQALLDEHVL) is disordered.

It belongs to the peptidase M74 family. As to quaternary structure, dimer. Requires Zn(2+) as cofactor.

The protein resides in the periplasm. In terms of biological role, murein endopeptidase that cleaves the D-alanyl-meso-2,6-diamino-pimelyl amide bond that connects peptidoglycan strands. Likely plays a role in the removal of murein from the sacculus. The sequence is that of Penicillin-insensitive murein endopeptidase from Salmonella paratyphi C (strain RKS4594).